Here is a 213-residue protein sequence, read N- to C-terminus: Proton-translocating ferredoxin:NAD(+) oxidoreductase complex subunit E (213 aa).

6 helical membrane passes run 11-31, 39-59, 69-89, 93-113, 128-148, and 170-190; these read GLIAENPIFVLALSLCPALAT, FTMGICVLFVITCNNTVVSII, VPVYITCIATIVTVVELVMQA, LLYKQLGIYLALVVVFAIILA, FFDGLGMGCGFTLALTIIGMI, and ALIMILPPGGFILIGYLVAIV.

The protein belongs to the NqrDE/RnfAE family. As to quaternary structure, the complex is composed of six subunits: RnfA, RnfB, RnfC, RnfD, RnfE and RnfG.

The protein localises to the cell membrane. In terms of biological role, part of a membrane-bound complex that couples electron transfer with translocation of ions across the membrane. Couples electron transfer from reduced ferredoxin to NAD(+) with translocation of H(+) out of the cell. Essential for energy conservation during autotrophic growth. Contributes to ATP synthesis during heterotrophic growth. The polypeptide is Proton-translocating ferredoxin:NAD(+) oxidoreductase complex subunit E (Clostridium ljungdahlii (strain ATCC 55383 / DSM 13528 / PETC)).